Here is a 264-residue protein sequence, read N- to C-terminus: Pyridoxine 5'-phosphate synthase (264 aa).

Residues 1–21 (MTDTAQILPTTLEQNPQNTSK) show a composition bias toward polar residues. Residues 1 to 22 (MTDTAQILPTTLEQNPQNTSKK) are disordered. N28 is a 3-amino-2-oxopropyl phosphate binding site. 30–31 (DH) provides a ligand contact to 1-deoxy-D-xylulose 5-phosphate. Residue R39 coordinates 3-amino-2-oxopropyl phosphate. H64 (proton acceptor) is an active-site residue. 2 residues coordinate 1-deoxy-D-xylulose 5-phosphate: R66 and H71. Catalysis depends on E91, which acts as the Proton acceptor. T121 is a 1-deoxy-D-xylulose 5-phosphate binding site. H217 functions as the Proton donor in the catalytic mechanism. 3-amino-2-oxopropyl phosphate is bound by residues G218 and 239–240 (GH).

The protein belongs to the PNP synthase family. In terms of assembly, homooctamer; tetramer of dimers.

The protein resides in the cytoplasm. It catalyses the reaction 3-amino-2-oxopropyl phosphate + 1-deoxy-D-xylulose 5-phosphate = pyridoxine 5'-phosphate + phosphate + 2 H2O + H(+). The protein operates within cofactor biosynthesis; pyridoxine 5'-phosphate biosynthesis; pyridoxine 5'-phosphate from D-erythrose 4-phosphate: step 5/5. In terms of biological role, catalyzes the complicated ring closure reaction between the two acyclic compounds 1-deoxy-D-xylulose-5-phosphate (DXP) and 3-amino-2-oxopropyl phosphate (1-amino-acetone-3-phosphate or AAP) to form pyridoxine 5'-phosphate (PNP) and inorganic phosphate. This is Pyridoxine 5'-phosphate synthase from Psychrobacter cryohalolentis (strain ATCC BAA-1226 / DSM 17306 / VKM B-2378 / K5).